The following is a 550-amino-acid chain: Glucose-6-phosphate isomerase (550 aa).

The active-site Proton donor is the Glu356. Catalysis depends on residues His387 and Lys515.

This sequence belongs to the GPI family.

It is found in the cytoplasm. The catalysed reaction is alpha-D-glucose 6-phosphate = beta-D-fructose 6-phosphate. It participates in carbohydrate biosynthesis; gluconeogenesis. It functions in the pathway carbohydrate degradation; glycolysis; D-glyceraldehyde 3-phosphate and glycerone phosphate from D-glucose: step 2/4. Functionally, catalyzes the reversible isomerization of glucose-6-phosphate to fructose-6-phosphate. This chain is Glucose-6-phosphate isomerase, found in Vibrio cholerae serotype O1 (strain ATCC 39315 / El Tor Inaba N16961).